Reading from the N-terminus, the 298-residue chain is ADP/ATP translocase 3 (298 aa).

Met-1 bears the N-acetylmethionine mark. Over 1–7 the chain is Mitochondrial intermembrane; it reads MTEQAIS. The residue at position 2 (Thr-2) is an N-acetylthreonine; in ADP/ATP translocase 3, N-terminally processed. One copy of the Solcar 1 repeat lies at 6–98; it reads ISFAKDFLAG…FAFKDKYKQI (93 aa). Residues 8–37 form a helical membrane-spanning segment; the sequence is FAKDFLAGGIAAAISKTAVAPIERVKLLLQ. The Mitochondrial matrix portion of the chain corresponds to 38–74; sequence VQHASKQIAADKQYKGIVDCIVRIPKEQGVLSFWRGN. Residue Lys-52 is modified to N6,N6,N6-trimethyllysine. Residues 75–99 form a helical membrane-spanning segment; it reads LANVIRYFPTQALNFAFKDKYKQIF. Residues Arg-80 and Lys-92 each coordinate ADP. Residues 100 to 109 lie on the Mitochondrial intermembrane side of the membrane; the sequence is LGGVDKHTQF. Lys-105 bears the N6-acetyllysine mark. Residues 110 to 130 form a helical membrane-spanning segment; the sequence is WRYFAGNLASGGAAGATSLCF. Solcar repeat units lie at residues 111 to 201 and 212 to 297; these read RYFA…AKGM and VSWM…LKKV. The Mitochondrial matrix segment spans residues 131 to 178; it reads VYPLDFARTRLAADVGKSGTEREFRGLGDCLVKITKSDGIRGLYQGFS. Residues 179–199 traverse the membrane as a helical segment; sequence VSVQGIIIYRAAYFGVYDTAK. Residues 200–210 are Mitochondrial intermembrane-facing; sequence GMLPDPKNTHI. A helical membrane pass occupies residues 211–231; that stretch reads VVSWMIAQTVTAVAGVVSYPF. Residues 232-273 lie on the Mitochondrial matrix side of the membrane; that stretch reads DTVRRRMMMQSGRKGADIMYTGTVDCWRKIFRDEGGKAFFKG. Residue Arg-235 coordinates ADP. Positions 235–240 are important for transport activity; it reads RRRMMM. Positions 235–240 match the Nucleotide carrier signature motif motif; it reads RRRMMM. Lys-268 carries the post-translational modification N6-acetyllysine. A helical membrane pass occupies residues 274–291; that stretch reads AWSNVLRGMGGAFVLVLY. The Mitochondrial intermembrane portion of the chain corresponds to 292–298; the sequence is DELKKVI.

It belongs to the mitochondrial carrier (TC 2.A.29) family. As to quaternary structure, monomer. Found in a complex with ARL2, ARL2BP and SLC25A6/ANT3. (Microbial infection) Interacts with influenza A virus PB1-F2 protein. In terms of assembly, (Microbial infection) Interacts with HIV-1 Vpr. Trimethylated by ANTKMT at Lys-52. Expressed in erythrocytes (at protein level).

Its subcellular location is the mitochondrion inner membrane. The protein localises to the membrane. It carries out the reaction ADP(in) + ATP(out) = ADP(out) + ATP(in). The enzyme catalyses H(+)(in) = H(+)(out). With respect to regulation, the matrix-open state (m-state) is inhibited by the membrane-permeable bongkrekic acid (BKA). The cytoplasmic-open state (c-state) is inhibited by the membrane-impermeable toxic inhibitor carboxyatractyloside (CATR). Proton transporter activity is inhibited by ADP:ATP antiporter activity. Functionally, ADP:ATP antiporter that mediates import of ADP into the mitochondrial matrix for ATP synthesis, and export of ATP out to fuel the cell. Cycles between the cytoplasmic-open state (c-state) and the matrix-open state (m-state): operates by the alternating access mechanism with a single substrate-binding site intermittently exposed to either the cytosolic (c-state) or matrix (m-state) side of the inner mitochondrial membrane. In addition to its ADP:ATP antiporter activity, also involved in mitochondrial uncoupling and mitochondrial permeability transition pore (mPTP) activity. Plays a role in mitochondrial uncoupling by acting as a proton transporter: proton transport uncouples the proton flows via the electron transport chain and ATP synthase to reduce the efficiency of ATP production and cause mitochondrial thermogenesis. Proton transporter activity is inhibited by ADP:ATP antiporter activity, suggesting that SLC25A6/ANT3 acts as a master regulator of mitochondrial energy output by maintaining a delicate balance between ATP production (ADP:ATP antiporter activity) and thermogenesis (proton transporter activity). Proton transporter activity requires free fatty acids as cofactor, but does not transport it. Also plays a key role in mPTP opening, a non-specific pore that enables free passage of the mitochondrial membranes to solutes of up to 1.5 kDa, and which contributes to cell death. It is however unclear if SLC25A6/ANT3 constitutes a pore-forming component of mPTP or regulates it. The protein is ADP/ATP translocase 3 of Homo sapiens (Human).